The primary structure comprises 128 residues: Large ribosomal subunit protein bL19 (128 aa).

Belongs to the bacterial ribosomal protein bL19 family.

Functionally, this protein is located at the 30S-50S ribosomal subunit interface and may play a role in the structure and function of the aminoacyl-tRNA binding site. The protein is Large ribosomal subunit protein bL19 of Paracidovorax citrulli (strain AAC00-1) (Acidovorax citrulli).